The following is a 360-amino-acid chain: Membrane-bound lytic murein transglycosylase C (360 aa).

An N-terminal signal peptide occupies residues 1-16 (MKKYLALALIAPLLVS). Cys17 carries N-palmitoyl cysteine lipidation. Residue Cys17 is the site of S-diacylglycerol cysteine attachment.

The protein belongs to the transglycosylase Slt family.

It is found in the cell outer membrane. It catalyses the reaction Exolytic cleavage of the (1-&gt;4)-beta-glycosidic linkage between N-acetylmuramic acid (MurNAc) and N-acetylglucosamine (GlcNAc) residues in peptidoglycan, from either the reducing or the non-reducing ends of the peptidoglycan chains, with concomitant formation of a 1,6-anhydrobond in the MurNAc residue.. Functionally, murein-degrading enzyme. May play a role in recycling of muropeptides during cell elongation and/or cell division. The protein is Membrane-bound lytic murein transglycosylase C of Klebsiella pneumoniae (strain 342).